The chain runs to 228 residues: MPRRGLVAGPDLDNFQRRYFTPSEVAEHNQLEDLWVSYLGFVYNLTPLVEEFKGDLLLKPILEVAGQDISHWFDPQTRDIRKHIDPLTGCMRYRTPRGRFVHIPPPLPRSDWANDFGVPWWKGANYQVGRLSARTRNIRIINTLATQEHTLQVGAQESMWEILHRYLPYNAHAASYTWKYDGKNLNMDQTLEENGIRDEEEEFDYLNMDGKLHTPAILLYFNDDLTEL.

The 67-residue stretch at Arg-17–His-83 folds into the Cytochrome b5 heme-binding domain. His-83 provides a ligand contact to heme.

This sequence belongs to the cytochrome b5 family.

It is found in the cytoplasm. The protein localises to the cytoskeleton. It localises to the cilium axoneme. Radial spoke stalk protein that binds heme under oxidizing conditions. Required for the coordinated beating of multiple cilia maybe by functioning in a redox signaling pathway. This is Cytochrome b5 domain-containing protein 1 (Cyb5d1) from Mus musculus (Mouse).